The following is a 29-amino-acid chain: Probable small toxic protein BsrH (29 aa).

Residues 6–26 (FQALMLMLAFGSFIIALLTYI) traverse the membrane as a helical segment.

Its subcellular location is the cell membrane. Its function is as follows. Possible toxic component of a type I toxin-antitoxin (TA) system; an overlapping antisense RNA has been identified. This is Probable small toxic protein BsrH from Bacillus subtilis (strain 168).